The following is a 179-amino-acid chain: Cell division protein ZapC (179 aa).

The protein belongs to the ZapC family. Interacts directly with FtsZ.

It is found in the cytoplasm. Functionally, contributes to the efficiency of the cell division process by stabilizing the polymeric form of the cell division protein FtsZ. Acts by promoting interactions between FtsZ protofilaments and suppressing the GTPase activity of FtsZ. This Photobacterium profundum (strain SS9) protein is Cell division protein ZapC.